Here is a 170-residue protein sequence, read N- to C-terminus: Guided entry of tail-anchored proteins factor 1 (170 aa).

Residues 1–6 (MAAGFN) lie on the Lumenal side of the membrane. A helical transmembrane segment spans residues 7-27 (WFLVLSSVFLCNLVKTFLPSI). Topologically, residues 28–96 (SSFLSKIFHK…KSRTAQQAKM (69 aa)) are cytoplasmic. Residues 35-93 (FHKDADQEMEMRTEIQNMKMELSTISMMDEFARYARLERKINKMTDQLKTLVKSRTAQQ) form an interaction with GET3/TRC40 region. A coiled-coil region spans residues 61-91 (MMDEFARYARLERKINKMTDQLKTLVKSRTA). A helical transmembrane segment spans residues 97–117 (KWIVNIAFYILQAALMISLIL). Residues 118 to 137 (KYYADPVTVVPSKWIAPLER) lie on the Lumenal side of the membrane. Residues 138-158 (LVAFPSGVAGGVGITCWLVVC) form a helical membrane-spanning segment. Residues 159–170 (NKVVALILQAVS) are Cytoplasmic-facing.

The protein belongs to the WRB/GET1 family. As to quaternary structure, component of the Golgi to ER traffic (GET) complex, which is composed of GET1/WRB, CAMLG/GET2 and GET3/TRC40. Within the complex, GET1 and CAMLG form a heterotetramer which is stabilized by phosphatidylinositol binding and which binds to the GET3 homodimer.

It localises to the endoplasmic reticulum membrane. Its function is as follows. Required for the post-translational delivery of tail-anchored (TA) proteins to the endoplasmic reticulum (ER). Together with CAMLG/GET2, acts as a membrane receptor for soluble GET3/TRC40, which recognizes and selectively binds the transmembrane domain of TA proteins in the cytosol. Required to ensure correct topology and ER insertion of CAMLG. This is Guided entry of tail-anchored proteins factor 1 from Danio rerio (Zebrafish).